The primary structure comprises 467 residues: L-histidine transporter HutT (467 aa).

A run of 13 helical transmembrane segments spans residues 18-38, 39-59, 71-91, 99-119, 125-145, 155-175, 200-220, 245-265, 280-300, 334-354, 358-378, 402-422, and 429-449; these read FMAL…SAIQ, MAGP…FMVM, VAGS…GFIL, MVIV…FWFP, IWVL…VKVF, LKVG…AFGF, VGGL…IEII, ILLF…WPQI, GIGS…ISAI, WMTV…NYLI, VFLL…LMIL, FWPY…GVLG, and AALI…LLWC.

Belongs to the amino acid-polyamine-organocation (APC) superfamily. Amino acid transporter (AAT) (TC 2.A.3.1) family.

Its subcellular location is the cell inner membrane. It carries out the reaction L-histidine(out) + n H(+)(out) = L-histidine(in) + n H(+)(in). Transport activity is inhibited by the proton ionophores carbonyl cyanide m-chlorophenyl hydrazine (CCCP) and 2,4-dinitrophenol (DNP), but not by valinomycin, nigericin and nonactin. Uptake is reduced in the presence of the sulfhydryl reagent N-ethylmaleimide (NEM). Uptake is not affected by arginine, lysine, proline or compounds structurally related to histidine such as imidazole, 3-amino-1,2,4-triazole and urocanate. Only 1,2,4-triazolyl-3-alanine reduces the rate of L-histidine uptake significantly. In terms of biological role, major high-affinity histidine transporter. Binds and catalyzes the uptake of histidine into the cell. Functions as an histidine:proton symporter with high specificity for histidine. The chain is L-histidine transporter HutT from Pseudomonas putida (strain ATCC 47054 / DSM 6125 / CFBP 8728 / NCIMB 11950 / KT2440).